The sequence spans 388 residues: Chorismate synthase (388 aa).

Positions 39 and 45 each coordinate NADP(+). FMN contacts are provided by residues 132 to 134 (RSS), 251 to 252 (NA), Gly296, 311 to 315 (KPIPT), and Arg337.

The protein belongs to the chorismate synthase family. Homotetramer. FMNH2 serves as cofactor.

The enzyme catalyses 5-O-(1-carboxyvinyl)-3-phosphoshikimate = chorismate + phosphate. The protein operates within metabolic intermediate biosynthesis; chorismate biosynthesis; chorismate from D-erythrose 4-phosphate and phosphoenolpyruvate: step 7/7. In terms of biological role, catalyzes the anti-1,4-elimination of the C-3 phosphate and the C-6 proR hydrogen from 5-enolpyruvylshikimate-3-phosphate (EPSP) to yield chorismate, which is the branch point compound that serves as the starting substrate for the three terminal pathways of aromatic amino acid biosynthesis. This reaction introduces a second double bond into the aromatic ring system. This is Chorismate synthase from Staphylococcus aureus (strain MW2).